The chain runs to 253 residues: Imidazole glycerol phosphate synthase subunit HisF (253 aa).

Catalysis depends on residues aspartate 11 and aspartate 130.

The protein belongs to the HisA/HisF family. Heterodimer of HisH and HisF.

Its subcellular location is the cytoplasm. It catalyses the reaction 5-[(5-phospho-1-deoxy-D-ribulos-1-ylimino)methylamino]-1-(5-phospho-beta-D-ribosyl)imidazole-4-carboxamide + L-glutamine = D-erythro-1-(imidazol-4-yl)glycerol 3-phosphate + 5-amino-1-(5-phospho-beta-D-ribosyl)imidazole-4-carboxamide + L-glutamate + H(+). Its pathway is amino-acid biosynthesis; L-histidine biosynthesis; L-histidine from 5-phospho-alpha-D-ribose 1-diphosphate: step 5/9. In terms of biological role, IGPS catalyzes the conversion of PRFAR and glutamine to IGP, AICAR and glutamate. The HisF subunit catalyzes the cyclization activity that produces IGP and AICAR from PRFAR using the ammonia provided by the HisH subunit. In Cereibacter sphaeroides (strain ATCC 17029 / ATH 2.4.9) (Rhodobacter sphaeroides), this protein is Imidazole glycerol phosphate synthase subunit HisF.